The sequence spans 456 residues: Cysteine--tRNA ligase (456 aa).

Residue cysteine 29 participates in Zn(2+) binding. The short motif at 31–41 is the 'HIGH' region element; that stretch reads PTVYDYAHVGN. Residues cysteine 209, histidine 234, and glutamate 238 each contribute to the Zn(2+) site. A 'KMSKS' region motif is present at residues 267–271; the sequence is KMSKS. ATP is bound at residue lysine 270.

This sequence belongs to the class-I aminoacyl-tRNA synthetase family. In terms of assembly, monomer. It depends on Zn(2+) as a cofactor.

The protein localises to the cytoplasm. The enzyme catalyses tRNA(Cys) + L-cysteine + ATP = L-cysteinyl-tRNA(Cys) + AMP + diphosphate. The polypeptide is Cysteine--tRNA ligase (Rhodospirillum centenum (strain ATCC 51521 / SW)).